A 445-amino-acid chain; its full sequence is Probable cytosol aminopeptidase (445 aa).

Mn(2+)-binding residues include Lys-217 and Asp-222. Lys-229 is a catalytic residue. Mn(2+) is bound by residues Asp-240, Asp-299, and Glu-301. Arg-303 is a catalytic residue.

It belongs to the peptidase M17 family. The cofactor is Mn(2+).

It localises to the cytoplasm. The enzyme catalyses Release of an N-terminal amino acid, Xaa-|-Yaa-, in which Xaa is preferably Leu, but may be other amino acids including Pro although not Arg or Lys, and Yaa may be Pro. Amino acid amides and methyl esters are also readily hydrolyzed, but rates on arylamides are exceedingly low.. The catalysed reaction is Release of an N-terminal amino acid, preferentially leucine, but not glutamic or aspartic acids.. Functionally, presumably involved in the processing and regular turnover of intracellular proteins. Catalyzes the removal of unsubstituted N-terminal amino acids from various peptides. The polypeptide is Probable cytosol aminopeptidase (pepA) (Mycoplasma pneumoniae (strain ATCC 29342 / M129 / Subtype 1) (Mycoplasmoides pneumoniae)).